The chain runs to 1032 residues: Importin beta-like protein KAP120 (1032 aa).

Residue Ala-2 is modified to N-acetylalanine. The 73-residue stretch at 31–103 (AEQQLRQWET…RGRLFEMIDE (73 aa)) folds into the Importin N-terminal domain.

The protein belongs to the importin beta family. Interacts with GTP-bound GSP1 and RFP1. Associates with the nuclear pore complex.

The protein localises to the cytoplasm. Its subcellular location is the nucleus. Functionally, functions in nuclear protein import as nuclear transport receptor. Serves as receptor for nuclear localization signals (NLS) in cargo substrates. Thought to mediate docking of the importin/substrate complex to the nuclear pore complex (NPC) through binding to nucleoporin and the complex is subsequently translocated through the pore by an energy requiring, RAN-dependent mechanism. Required for nuclear import of Ho endonuclease and RFP1, and involved in rRNA-processing and assembly or export of 60S ribosomal subunits. The polypeptide is Importin beta-like protein KAP120 (KAP120) (Saccharomyces cerevisiae (strain ATCC 204508 / S288c) (Baker's yeast)).